A 1001-amino-acid polypeptide reads, in one-letter code: MKRKMLKRLLTSAFACMFIANGLITTTVRAVGPKTGEENQVLVPNLNPTPENLEVVGDGFKITSSINLVGEEEADENAVNALREFLTANNIEINSENDPNSTTLIIGEVDDDIPELDEALNGTTAENLKEEGYALVSNDGKIAIEGKDGDGTFYGVQTFKQLVKESNIPEVNITDYPTVSARGIVEGFYGTPWTHQDRLDQIKFYGENKLNTYIYAPKDDPYHREKWREPYPESEMQRMQELINASAENKVDFVFGISPGIDIRFDGDAGEEDFNHLITKAESLYDMGVRSFAIYWDDIQDKSAAKHAQVLNRFNEEFVKAKGDVKPLITVPTEYDTGAMVSNGQPRAYTRIFAETVDPSIEVMWTGPGVVTNEIPLSDAQLISGIYNRNMAVWWNYPVTDYFKGKLALGPMHGLDKGLNQYVDFFTVNPMEHAELSKISIHTAADYSWNMDNYDYDKAWNRAIDMLYGDLAEDMKVFANHSTRMDNKTWAKSGREDAPELRAKMDELWNKLSSKEDASALIEELYGEFARMEEACNNLKANLPEVALEECSRQLDELITLAQGDKASLDMIVAQLNEDTEAYESAKEIAQNKLNTALSSFAVISEKVAQSFIQEALSFDLTLINPRTVKITASSEETSGENAPASFASDGDMNTFWHSKWSSPAHEGPHHLTLELDNVYEINKVKYAPRQDSKNGRITGYKVSVSLDGENFTEVKTGTLEDNAAIKFIEFDSVDAKYVRLDVTDSVSDQANGRGKFATAAEVNVHGKLKENAEVTGSVSLEALEEVQVGENLEVGVGIDELVNAEAFAYDFTLNYDENAFEYVEAISDDGVFVNAKKIEDGKVRVLVSSLTGEPLPAKEVLAKVVLRAEAKAEGSNLSVTNSSVGDGEGLVHEIAGTEKTVNIIEGTSPEIVVNPVRDFKASEINKKNVTVTWTEPETTEGLEGYILYKDGKKVAEIGKDETSYTFKKLNRHTIYNFKIAAKYSNGEVSSKESLTLRTAR.

Residues 1–30 form the signal peptide; that stretch reads MKRKMLKRLLTSAFACMFIANGLITTTVRA. Residues 179–469 form a catalytic domain region; the sequence is VSARGIVEGF…WNRAIDMLYG (291 aa). Positions 180 to 452 constitute a GH84 domain; the sequence is SARGIVEGFY…TAADYSWNMD (273 aa). Positions 187, 218, and 297 each coordinate a protein. Residue D298 is the Proton donor of the active site. A protein is bound by residues Y335, 394 to 396, D401, and N429; that span reads WWN. Coiled coils occupy residues 515–543 and 573–597; these read KEDASALIEELYGEFARMEEACNNLKANL and VAQLNEDTEAYESAKEIAQNKLNTA. Residues 916-1001 enclose the Fibronectin type-III domain; the sequence is PVRDFKASEI…KESLTLRTAR (86 aa).

This sequence belongs to the glycosyl hydrolase 84 family.

The catalysed reaction is 3-O-(N-acetyl-beta-D-glucosaminyl)-L-seryl-[protein] + H2O = N-acetyl-D-glucosamine + L-seryl-[protein]. It catalyses the reaction 3-O-(N-acetyl-beta-D-glucosaminyl)-L-threonyl-[protein] + H2O = L-threonyl-[protein] + N-acetyl-D-glucosamine. With respect to regulation, inhibited by O-(2-acetamido-2-deoxy-D-glucopyranosylidene)amino-N-phenyl-carbamate (PUGNAc) and streptozotocin. Its function is as follows. Binds carbohydrates. Capable of hydrolyzing the glycosidic link of O-GlcNAcylated proteins. Can bind and deglycosylate O-glycosylated peptides from mammals. This Clostridium perfringens (strain ATCC 13124 / DSM 756 / JCM 1290 / NCIMB 6125 / NCTC 8237 / Type A) protein is O-GlcNAcase NagJ (nagJ).